We begin with the raw amino-acid sequence, 288 residues long: Acetyl-coenzyme A carboxylase carboxyl transferase subunit beta (288 aa).

The 257-residue stretch at 32–288 (LFAKCPACKH…LELHTEVENV (257 aa)) folds into the CoA carboxyltransferase N-terminal domain. Residues Cys-36, Cys-39, Cys-54, and Cys-57 each contribute to the Zn(2+) site. The C4-type zinc finger occupies 36-57 (CPACKHTIYQKDLGKNKVCPNC).

This sequence belongs to the AccD/PCCB family. As to quaternary structure, acetyl-CoA carboxylase is a heterohexamer composed of biotin carboxyl carrier protein (AccB), biotin carboxylase (AccC) and two subunits each of ACCase subunit alpha (AccA) and ACCase subunit beta (AccD). The cofactor is Zn(2+).

It localises to the cytoplasm. The enzyme catalyses N(6)-carboxybiotinyl-L-lysyl-[protein] + acetyl-CoA = N(6)-biotinyl-L-lysyl-[protein] + malonyl-CoA. The protein operates within lipid metabolism; malonyl-CoA biosynthesis; malonyl-CoA from acetyl-CoA: step 1/1. Its function is as follows. Component of the acetyl coenzyme A carboxylase (ACC) complex. Biotin carboxylase (BC) catalyzes the carboxylation of biotin on its carrier protein (BCCP) and then the CO(2) group is transferred by the transcarboxylase to acetyl-CoA to form malonyl-CoA. The polypeptide is Acetyl-coenzyme A carboxylase carboxyl transferase subunit beta (Lactococcus lactis subsp. cremoris (strain MG1363)).